The following is a 476-amino-acid chain: MVAAPTSPAELKLGVDCVIADINLADFGRKELDIAETEMPGLMALREKYGSEKPLKGARIAGSLHMTIQTAVLIETLVELGAEVRWASCNIFSTQDHAAAAIAAKGIPVFAVKGETLEEYWDYTHSILEWGDGGSPNMILDDGGDATGLVMLGSKAEQDITVLDNPGNEEETFLFASIKKKLAQDPTFYSRTKAQIQGVTEETTTGVARLYKMQKSGELPFPAINVNDSVTKSKFDNLYGCRESLVDSIKRATDVMVAGKQALVIGYGDVGKGSAQSLRGLGATVCIAEVDPICALQAAMEGYRVVRLEDVVEDMDIFVTATGNYQVIRNEHLVKMKDEAIVCNIGHFDNEIDVASLKEYEWENIKPQVDHITLPSGNRIILLAEGRLVNLGCATGHPSFVMSNSFTNQVLAQIELFTKGDEYAKEVYVLPKHLDEMVARLHLGRIGANLTELSKDQADYINVPVEGPYKPDHYRY.

Substrate contacts are provided by T67, D142, and E202. T203–T205 is a binding site for NAD(+). Residues K232 and D236 each coordinate substrate. NAD(+) is bound by residues N237, G266–G271, E289, N324, I345–H347, and N390.

The protein belongs to the adenosylhomocysteinase family. NAD(+) serves as cofactor.

Its subcellular location is the cytoplasm. The enzyme catalyses S-adenosyl-L-homocysteine + H2O = L-homocysteine + adenosine. The protein operates within amino-acid biosynthesis; L-homocysteine biosynthesis; L-homocysteine from S-adenosyl-L-homocysteine: step 1/1. Functionally, may play a key role in the regulation of the intracellular concentration of adenosylhomocysteine. In Synechococcus sp. (strain CC9605), this protein is Adenosylhomocysteinase.